The sequence spans 501 residues: Putative BTB/POZ domain-containing protein L107 (501 aa).

In terms of domain architecture, BTB spans 16 to 87 (TDLELTLVDS…FYITDIERSQ (72 aa)).

Belongs to the mimivirus BTB/WD family.

The polypeptide is Putative BTB/POZ domain-containing protein L107 (Acanthamoeba polyphaga mimivirus (APMV)).